The following is a 338-amino-acid chain: Anthranilate phosphoribosyltransferase (338 aa).

Residues G81, 84–85, T89, 91–94, 109–117, and A121 contribute to the 5-phospho-alpha-D-ribose 1-diphosphate site; these read GD, NIST, and KHGNRNLSS. G81 contacts anthranilate. Residue S93 coordinates Mg(2+). N112 provides a ligand contact to anthranilate. Residue R167 participates in anthranilate binding. Residues D226 and E227 each contribute to the Mg(2+) site.

It belongs to the anthranilate phosphoribosyltransferase family. As to quaternary structure, homodimer. Mg(2+) serves as cofactor.

The catalysed reaction is N-(5-phospho-beta-D-ribosyl)anthranilate + diphosphate = 5-phospho-alpha-D-ribose 1-diphosphate + anthranilate. It participates in amino-acid biosynthesis; L-tryptophan biosynthesis; L-tryptophan from chorismate: step 2/5. Catalyzes the transfer of the phosphoribosyl group of 5-phosphorylribose-1-pyrophosphate (PRPP) to anthranilate to yield N-(5'-phosphoribosyl)-anthranilate (PRA). This is Anthranilate phosphoribosyltransferase from Cereibacter sphaeroides (strain ATCC 17025 / ATH 2.4.3) (Rhodobacter sphaeroides).